A 194-amino-acid chain; its full sequence is 7-methyl-GTP pyrophosphatase (194 aa).

Catalysis depends on Asp-70, which acts as the Proton acceptor.

It belongs to the Maf family. YceF subfamily. A divalent metal cation serves as cofactor.

The protein resides in the cytoplasm. It catalyses the reaction N(7)-methyl-GTP + H2O = N(7)-methyl-GMP + diphosphate + H(+). Functionally, nucleoside triphosphate pyrophosphatase that hydrolyzes 7-methyl-GTP (m(7)GTP). May have a dual role in cell division arrest and in preventing the incorporation of modified nucleotides into cellular nucleic acids. This chain is 7-methyl-GTP pyrophosphatase, found in Vibrio vulnificus (strain YJ016).